The sequence spans 483 residues: O-acetyltransferase pboB (483 aa).

Belongs to the fumigaclavine B O-acetyltransferase family. Monomer.

It functions in the pathway secondary metabolite biosynthesis. O-acetyltransferase; part of the gene cluster that mediates the biosynthesis of protubonine B, a hydroxylated and diacetylated cyclo-L-Trp-L-Leu derivative. Within the pathway, pboB catalyzes the acetylation of protubonine C at N-1 of the indoline ring to produce protubonine B. The first step of the protubonine B synthesis is performed by the nonribosomal peptide synthetase pboA that catalyzes the formation of cyclo-L-Trp-L-Leu by condensing L-Leu with L-Trp. The flavin-dependent monooxygenase pboD is responsible for hydroxylation at C-3 of the indole ring and subsequent formation of the pyrrolidine ring, leadind to protubonine D. Protubonine D is further diacetylated by two acetyltransferases, pboB and pboC, to form the final product protubonine B via protubonine C. This is O-acetyltransferase pboB from Aspergillus ustus.